The following is a 408-amino-acid chain: Multidrug resistance protein MdtG (408 aa).

11 helical membrane-spanning segments follow: residues 16–36, 58–78, 92–112, 115–135, 146–166, 173–193, 224–244, 256–276, 290–310, 319–339, and 378–398; these read LIVA…VMPF, IVFS…GGLA, LGMG…QFLI, ALLG…ATQV, TLST…GLLA, PVFF…LFCI, LFVT…ILTL, VAFI…LSAP, ILIT…YVQT, FLLG…LVYN, and AVFL…WNSL.

It belongs to the major facilitator superfamily. DHA1 family. MdtG (TC 2.A.1.2.20) subfamily.

The protein resides in the cell inner membrane. Its function is as follows. Confers resistance to fosfomycin and deoxycholate. This is Multidrug resistance protein MdtG from Escherichia coli O81 (strain ED1a).